Consider the following 859-residue polypeptide: Leucine--tRNA ligase (859 aa).

The 'HIGH' region motif lies at 43–53 (PYPSGRIHMGH). A 'KMSKS' region motif is present at residues 614–618 (KMSKS). Position 617 (Lys617) interacts with ATP.

The protein belongs to the class-I aminoacyl-tRNA synthetase family.

It localises to the cytoplasm. It catalyses the reaction tRNA(Leu) + L-leucine + ATP = L-leucyl-tRNA(Leu) + AMP + diphosphate. In Magnetococcus marinus (strain ATCC BAA-1437 / JCM 17883 / MC-1), this protein is Leucine--tRNA ligase.